We begin with the raw amino-acid sequence, 201 residues long: ATP-dependent Clp protease proteolytic subunit (201 aa).

Catalysis depends on S98, which acts as the Nucleophile. H123 is a catalytic residue.

It belongs to the peptidase S14 family. Fourteen ClpP subunits assemble into 2 heptameric rings which stack back to back to give a disk-like structure with a central cavity, resembling the structure of eukaryotic proteasomes.

It is found in the cytoplasm. It catalyses the reaction Hydrolysis of proteins to small peptides in the presence of ATP and magnesium. alpha-casein is the usual test substrate. In the absence of ATP, only oligopeptides shorter than five residues are hydrolyzed (such as succinyl-Leu-Tyr-|-NHMec, and Leu-Tyr-Leu-|-Tyr-Trp, in which cleavage of the -Tyr-|-Leu- and -Tyr-|-Trp bonds also occurs).. Its function is as follows. Cleaves peptides in various proteins in a process that requires ATP hydrolysis. Has a chymotrypsin-like activity. Plays a major role in the degradation of misfolded proteins. In Rickettsia peacockii (strain Rustic), this protein is ATP-dependent Clp protease proteolytic subunit.